A 330-amino-acid polypeptide reads, in one-letter code: Aspartate--ammonia ligase (330 aa).

Belongs to the class-II aminoacyl-tRNA synthetase family. AsnA subfamily.

It is found in the cytoplasm. It catalyses the reaction L-aspartate + NH4(+) + ATP = L-asparagine + AMP + diphosphate + H(+). Its pathway is amino-acid biosynthesis; L-asparagine biosynthesis; L-asparagine from L-aspartate (ammonia route): step 1/1. This chain is Aspartate--ammonia ligase, found in Streptococcus equi subsp. zooepidemicus (strain H70).